The chain runs to 256 residues: uncharacterized protein (256 aa).

The stretch at 187-223 (MEEEEISEVEDALNVLQRLCAQEEGDNKEAETNNNNY) forms a coiled coil.

This is an uncharacterized protein from Ostreid herpesvirus 1 (isolate France) (OsHV-1).